The primary structure comprises 100 residues: Serine protease inhibitor 1 protein (100 aa).

A signal peptide spans 1–20 (MKHLLIVSLVFVTIIWKIEC). 5 disulfides stabilise this stretch: cysteine 42-cysteine 74, cysteine 51-cysteine 69, cysteine 54-cysteine 65, cysteine 58-cysteine 93, and cysteine 76-cysteine 90. The TIL domain occupies 42–93 (CGLNEVWMVCSSCEEECGKTPQPCPRICQPARCQCPAHKGYRRDGQGNCIFC).

The protein resides in the secreted. This Caenorhabditis elegans protein is Serine protease inhibitor 1 protein.